The chain runs to 318 residues: Olfactory receptor-like protein COR3 (318 aa).

Residues 1–26 (MASGNCTTPTTFILSGLTDNPGLQMP) are Extracellular-facing. Asn-5 carries N-linked (GlcNAc...) asparagine glycosylation. A helical transmembrane segment spans residues 27 to 49 (LFMVFLAIYTITLLTNLGLIRLI). The Cytoplasmic segment spans residues 50 to 57 (SVDLHLQT). A helical membrane pass occupies residues 58–79 (PMYIFLQNLSFTDAAYSTVITP). Topologically, residues 80–100 (KMLATFLEERKTISYVGCILQ) are extracellular. Cysteines 97 and 179 form a disulfide. A helical transmembrane segment spans residues 101-120 (YFSFVLLTTSECLLLAVMAY). The Cytoplasmic portion of the chain corresponds to 121-139 (DRYVAICKPLLYPAIMTKA). Residues 140–164 (VCWRLVESLYFLAFLNSLVHTCGLL) traverse the membrane as a helical segment. Over 165 to 205 (KLSFCYSNVVNHFFCDISPLFQISSSSIAISELLVIISGSL) the chain is Extracellular. The helical transmembrane segment at 206-226 (FVMSSIIIILISYVFIILTVV) threads the bilayer. Topologically, residues 227–239 (MIRSKDGKYKAFS) are cytoplasmic. The chain crosses the membrane as a helical span at residues 240-260 (TCTSHLMAVSLFHGTVIFMYL). Residues 261-271 (RPVKLFSLDTD) are Extracellular-facing. A helical transmembrane segment spans residues 272–292 (KIASLFYTVVIPMLNPLIYSW). Residues 293-318 (RNKEVKDALRRLTATTFGFIDSKAVQ) lie on the Cytoplasmic side of the membrane.

The protein belongs to the G-protein coupled receptor 1 family.

It localises to the cell membrane. Odorant receptor. The chain is Olfactory receptor-like protein COR3 (COR3) from Gallus gallus (Chicken).